Consider the following 65-residue polypeptide: Disintegrin VLO4 (65 aa).

The 65-residue stretch at 1 to 65 folds into the Disintegrin domain; it reads MNSGNPCCDP…PDCPRNPWKG (65 aa). 4 cysteine pairs are disulfide-bonded: C7–C30, C21–C27, C26–C51, and C39–C58. The short motif at 43–45 is the Cell attachment site element; sequence RGD.

Belongs to the disintegrin family. Dimeric disintegrin subfamily. In terms of assembly, homodimer; disulfide-linked. Expressed by the venom gland.

Its subcellular location is the secreted. Poor inhibitor of platelet aggregation. The disintegrin inhibits the adhesion of cells expressing the RGD-dependent integrin alpha-5/beta-1 (ITGA5/ITGB1) to immobilized fibronectin. Inhibition on alpha-2b/beta-3 (ITGA2B/ITGB3) is low. This is Disintegrin VLO4 from Macrovipera lebetina obtusa (Levant blunt-nosed viper).